Reading from the N-terminus, the 362-residue chain is Probable dual-specificity RNA methyltransferase RlmN (362 aa).

Glu105 functions as the Proton acceptor in the catalytic mechanism. Positions 111 to 344 (HEYGNSICVT…VTIRREQGHD (234 aa)) constitute a Radical SAM core domain. A disulfide bridge connects residues Cys118 and Cys349. Residues Cys125, Cys129, and Cys132 each contribute to the [4Fe-4S] cluster site. Residues 175-176 (GE), Ser207, 230-232 (SLH), and Asn306 contribute to the S-adenosyl-L-methionine site. Cys349 acts as the S-methylcysteine intermediate in catalysis.

Belongs to the radical SAM superfamily. RlmN family. Requires [4Fe-4S] cluster as cofactor.

It is found in the cytoplasm. The catalysed reaction is adenosine(2503) in 23S rRNA + 2 reduced [2Fe-2S]-[ferredoxin] + 2 S-adenosyl-L-methionine = 2-methyladenosine(2503) in 23S rRNA + 5'-deoxyadenosine + L-methionine + 2 oxidized [2Fe-2S]-[ferredoxin] + S-adenosyl-L-homocysteine. It catalyses the reaction adenosine(37) in tRNA + 2 reduced [2Fe-2S]-[ferredoxin] + 2 S-adenosyl-L-methionine = 2-methyladenosine(37) in tRNA + 5'-deoxyadenosine + L-methionine + 2 oxidized [2Fe-2S]-[ferredoxin] + S-adenosyl-L-homocysteine. Specifically methylates position 2 of adenine 2503 in 23S rRNA and position 2 of adenine 37 in tRNAs. The sequence is that of Probable dual-specificity RNA methyltransferase RlmN from Bacillus cytotoxicus (strain DSM 22905 / CIP 110041 / 391-98 / NVH 391-98).